Here is a 401-residue protein sequence, read N- to C-terminus: Voltage-gated potassium channel subunit beta-3 (401 aa).

2 stretches are compositionally biased toward polar residues: residues Met-1–Ser-14 and Gly-32–Arg-41. The tract at residues Met-1–Asn-49 is disordered. NADP(+)-binding residues include Thr-90, Trp-91, Gln-97, and Asp-119. Tyr-124 serves as the catalytic Proton donor/acceptor. NADP(+) contacts are provided by Asn-192, Ser-222, Arg-223, Gln-248, Trp-277, Ser-278, Pro-279, Leu-280, Ala-281, Cys-282, Lys-288, Arg-298, Gly-357, Ser-359, Gln-363, Glu-366, and Asn-367.

This sequence belongs to the shaker potassium channel beta subunit family. Forms heteromultimeric complex with alpha subunits. Identified in potassium channel complexes containing KCNA1 and KCNA2.

The protein localises to the cytoplasm. Regulatory subunit of the voltage-gated potassium (Kv) channels composed of pore-forming and potassium-conducting alpha subunits and of regulatory beta subunit. The beta-3/KCNAB3 subunit may mediate closure of potassium channels. Increases and accelerates inactivation of Kv1.1/KCNA1 and Kv2.2/KCNA2 subunit-containing channels. May display nicotinamide adenine dinucleotide phosphate (NADPH)-dependent aldoketoreductase activity. The binding of oxidized and reduced NADP(H) cofactors may be required for the regulation of potassium channel activity. The protein is Voltage-gated potassium channel subunit beta-3 (kcnab3) of Xenopus laevis (African clawed frog).